We begin with the raw amino-acid sequence, 399 residues long: Elongation factor Tu (399 aa).

In terms of domain architecture, tr-type G spans 10–209 (KPHVNIGTIG…EVDAYIPTPV (200 aa)). Positions 19 to 26 (GHVDHGKT) are G1. 19–26 (GHVDHGKT) contributes to the GTP binding site. Position 26 (threonine 26) interacts with Mg(2+). The tract at residues 60 to 64 (GITIA) is G2. The tract at residues 81-84 (DCPG) is G3. GTP is bound by residues 81-85 (DCPGH) and 136-139 (NKQD). A G4 region spans residues 136–139 (NKQD). A G5 region spans residues 174 to 176 (SAL).

It belongs to the TRAFAC class translation factor GTPase superfamily. Classic translation factor GTPase family. EF-Tu/EF-1A subfamily. As to quaternary structure, monomer.

The protein resides in the cytoplasm. It catalyses the reaction GTP + H2O = GDP + phosphate + H(+). Functionally, GTP hydrolase that promotes the GTP-dependent binding of aminoacyl-tRNA to the A-site of ribosomes during protein biosynthesis. The protein is Elongation factor Tu of Helicobacter acinonychis (strain Sheeba).